The chain runs to 589 residues: F-box only protein 24 (589 aa).

The F-box domain maps to 23–69 (PISVQLFPPELVEHIVSFLPVKDLVALGQTCHYFHEVCDAEGVWRRI). An RCC1 repeat occupies 386–435 (GRIFMQGNNRYGQLGTGDKMDRGEPTQVHYLQRPIALWCGLNHSLVLSQT). Positions 506-526 (VGGSPEPSQGAGAPQDPGGTA) are disordered.

In terms of assembly, directly interacts with SKP1 and CUL1.

Its function is as follows. Substrate-recognition component of the SCF (SKP1-CUL1-F-box protein)-type E3 ubiquitin ligase complex. This chain is F-box only protein 24 (Fbxo24), found in Mus musculus (Mouse).